Consider the following 663-residue polypeptide: (R)-specific secondary-alkylsulfatase (663 aa).

The N-terminal stretch at 1 to 28 (MSRFIRASQRRTLLATLIAATLAQPLLA) is a signal peptide. The Zn(2+) site is built by His179, His181, Asp183, and His184. Residue Gln232 coordinates sulfate. The Zn(2+) site is built by Glu291 and Asp310. Sulfate-binding positions include 318–323 (NLLTPR) and Arg328. His355 lines the Zn(2+) pocket. Sulfate is bound at residue Tyr417.

The protein belongs to the metallo-beta-lactamase superfamily. Type III sulfatase family. In terms of assembly, homodimer.

It carries out the reaction an (R)-secondary-alkyl sulfate + H2O = an (S)-secondary-alcohol + sulfate.. Its function is as follows. Alkylsulfatase that catalyzes the enantioselective hydrolysis of secondary-alkylsulfates with strict inversion of configuration, leading to the formation of homochiral (S)-configurated alcohols and nonreacted sulfate esters. The substrate spectrum includes a range of linear, branched or cyclic sec-alkylsulfates. Can use sec-alkylsulfate esters bearing aromatic, olefinic and acetylenic moieties. Acts by cleaving the C-O bond, resulting in inversion at the carbon. This Pseudomonas sp protein is (R)-specific secondary-alkylsulfatase.